A 418-amino-acid chain; its full sequence is L-rhamnose isomerase (418 aa).

Residues His261, Asp293, and Asp295 each coordinate Mn(2+).

This sequence belongs to the rhamnose isomerase family. It depends on Mn(2+) as a cofactor.

The protein resides in the cytoplasm. The catalysed reaction is L-rhamnopyranose = L-rhamnulose. It functions in the pathway carbohydrate degradation; L-rhamnose degradation; glycerone phosphate from L-rhamnose: step 1/3. Functionally, catalyzes the interconversion of L-rhamnose and L-rhamnulose. The sequence is that of L-rhamnose isomerase from Clostridium beijerinckii (strain ATCC 51743 / NCIMB 8052) (Clostridium acetobutylicum).